Consider the following 371-residue polypeptide: Anhydro-N-acetylmuramic acid kinase (371 aa).

An ATP-binding site is contributed by 9 to 16 (GTSLDAVD).

This sequence belongs to the anhydro-N-acetylmuramic acid kinase family.

The enzyme catalyses 1,6-anhydro-N-acetyl-beta-muramate + ATP + H2O = N-acetyl-D-muramate 6-phosphate + ADP + H(+). It functions in the pathway amino-sugar metabolism; 1,6-anhydro-N-acetylmuramate degradation. The protein operates within cell wall biogenesis; peptidoglycan recycling. Functionally, catalyzes the specific phosphorylation of 1,6-anhydro-N-acetylmuramic acid (anhMurNAc) with the simultaneous cleavage of the 1,6-anhydro ring, generating MurNAc-6-P. Is required for the utilization of anhMurNAc either imported from the medium or derived from its own cell wall murein, and thus plays a role in cell wall recycling. The chain is Anhydro-N-acetylmuramic acid kinase from Caulobacter vibrioides (strain ATCC 19089 / CIP 103742 / CB 15) (Caulobacter crescentus).